The sequence spans 430 residues: Enolase (430 aa).

A (2R)-2-phosphoglycerate-binding site is contributed by Q165. The Proton donor role is filled by E207. D244, E287, and D314 together coordinate Mg(2+). (2R)-2-phosphoglycerate is bound by residues K339, R368, S369, and K390. K339 functions as the Proton acceptor in the catalytic mechanism.

The protein belongs to the enolase family. As to quaternary structure, component of the RNA degradosome, a multiprotein complex involved in RNA processing and mRNA degradation. Mg(2+) serves as cofactor.

The protein localises to the cytoplasm. It localises to the secreted. It is found in the cell surface. The catalysed reaction is (2R)-2-phosphoglycerate = phosphoenolpyruvate + H2O. The protein operates within carbohydrate degradation; glycolysis; pyruvate from D-glyceraldehyde 3-phosphate: step 4/5. Catalyzes the reversible conversion of 2-phosphoglycerate (2-PG) into phosphoenolpyruvate (PEP). It is essential for the degradation of carbohydrates via glycolysis. The protein is Enolase of Xanthomonas campestris pv. campestris (strain 8004).